Here is a 322-residue protein sequence, read N- to C-terminus: MTNQTVSPLFPHRHLLGIKGLSPLDILCLLDLAYQEIAVSRQPEKKKSVLRGRTQINLFFEASTRTQSSFELAGKRLGADVMNMSVGNSSVKKGETLIDTAMTLNAMQPDILVIRHASAGAAALLAQKVGCSVVNAGDGAHEHPTQALLDALTIRRAKGQIENLIVAICGDVLHSRVARSNILLLNALGARVRVVAPSTLLPAGMADMSVEVFNSMEEGLKDADVVMMLRLQRERMAGSFVPSVREYFHFYGLDREKLKFAKPDALVMHPGPMNRGVEIASDVADGPQSVIQQQVEMGVAVRMAVMEALLDPRRNPGNGEPA.

Residues R65 and T66 each contribute to the carbamoyl phosphate site. Residue K93 coordinates L-aspartate. 3 residues coordinate carbamoyl phosphate: R115, H143, and Q146. Residues R176 and R230 each contribute to the L-aspartate site. Carbamoyl phosphate contacts are provided by G271 and P272.

The protein belongs to the aspartate/ornithine carbamoyltransferase superfamily. ATCase family. As to quaternary structure, heterododecamer (2C3:3R2) of six catalytic PyrB chains organized as two trimers (C3), and six regulatory PyrI chains organized as three dimers (R2).

It carries out the reaction carbamoyl phosphate + L-aspartate = N-carbamoyl-L-aspartate + phosphate + H(+). It participates in pyrimidine metabolism; UMP biosynthesis via de novo pathway; (S)-dihydroorotate from bicarbonate: step 2/3. Catalyzes the condensation of carbamoyl phosphate and aspartate to form carbamoyl aspartate and inorganic phosphate, the committed step in the de novo pyrimidine nucleotide biosynthesis pathway. In Brucella canis (strain ATCC 23365 / NCTC 10854 / RM-666), this protein is Aspartate carbamoyltransferase catalytic subunit.